Reading from the N-terminus, the 152-residue chain is Methylglyoxal synthase (152 aa).

The 148-residue stretch at 5 to 152 (TRTVQAQKHI…YQLYLQQRLK (148 aa)) folds into the MGS-like domain. Substrate-binding positions include His19, Lys23, 45-48 (TGTT), and 65-66 (SG). The active-site Proton donor/acceptor is Asp71. Position 98 (His98) interacts with substrate.

Belongs to the methylglyoxal synthase family.

The catalysed reaction is dihydroxyacetone phosphate = methylglyoxal + phosphate. Catalyzes the formation of methylglyoxal from dihydroxyacetone phosphate. The chain is Methylglyoxal synthase from Erwinia tasmaniensis (strain DSM 17950 / CFBP 7177 / CIP 109463 / NCPPB 4357 / Et1/99).